The primary structure comprises 141 residues: uncharacterized protein (141 aa).

4 helical membrane passes run 7-24 (YRIP…FLSP), 39-56 (FLKF…HRGI), 69-91 (FYLI…ILGF), and 116-138 (FFIL…SSFI).

The protein resides in the cell membrane. This is an uncharacterized protein from Aquifex aeolicus (strain VF5).